Reading from the N-terminus, the 541-residue chain is NEDD8-activating enzyme E1 regulatory subunit (541 aa).

The protein belongs to the ubiquitin-activating E1 family. ULA1 subfamily. In terms of assembly, heterodimer of uba-3 and ula-1. The complex binds NEDD8 and ubc-12.

Its pathway is protein modification; protein neddylation. Regulatory subunit of the dimeric uba-3-ula-1 E1 enzyme. E1 activates NEDD8 by first adenylating its C-terminal glycine residue with ATP, thereafter linking this residue to the side chain of the catalytic cysteine, yielding a NEDD8-rfl-1 (uba-3) thioester and free AMP. E1 finally transfers NEDD8 to the catalytic cysteine of ubc-12. Required for rfl-1 (uba-3) nuclear localization during early embryonic development. The polypeptide is NEDD8-activating enzyme E1 regulatory subunit (ula-1) (Caenorhabditis elegans).